A 272-amino-acid polypeptide reads, in one-letter code: Bis(5'-nucleosyl)-tetraphosphatase, symmetrical (272 aa).

Belongs to the Ap4A hydrolase family.

It carries out the reaction P(1),P(4)-bis(5'-adenosyl) tetraphosphate + H2O = 2 ADP + 2 H(+). Functionally, hydrolyzes diadenosine 5',5'''-P1,P4-tetraphosphate to yield ADP. The sequence is that of Bis(5'-nucleosyl)-tetraphosphatase, symmetrical from Ectopseudomonas mendocina (strain ymp) (Pseudomonas mendocina).